Reading from the N-terminus, the 277-residue chain is GPALPP motifs-containing protein 1 (277 aa).

The tract at residues 1 to 240 is disordered; it reads MARDLIGPAL…VWTDTPADRE (240 aa). Ala2 carries the N-acetylalanine modification. A GPALPP motif 1 motif is present at residues 7 to 12; sequence GPALPP. The residue at position 28 (Ser28) is a Phosphoserine. A GPALPP motif 2 motif is present at residues 32–37; that stretch reads GPALPP. Acidic residues-rich tracts occupy residues 60–69 and 81–90; these read GNQESEEDDT and DDDDDDDDEG. Residues 93–98 carry the GPALPP motif 3 motif; the sequence is GPALPP. Ser106 carries the post-translational modification Phosphoserine. The span at 108-117 shows a compositional bias: pro residues; it reads PRPMIGPALP. Positions 113–118 match the GPALPP motif 4 motif; sequence GPALPP. Residues Ser138 and Ser143 each carry the phosphoserine modification. Thr147 carries the post-translational modification Phosphothreonine. 2 positions are modified to phosphoserine: Ser149 and Ser150. Positions 172–196 are enriched in basic and acidic residues; that stretch reads EFEKRAQRMKEKLTKGDDDSSKPIT.

The polypeptide is GPALPP motifs-containing protein 1 (GPALPP1) (Bos taurus (Bovine)).